A 139-amino-acid chain; its full sequence is 3-hydroxyacyl-[acyl-carrier-protein] dehydratase FabZ (139 aa).

Residue H46 is part of the active site.

This sequence belongs to the thioester dehydratase family. FabZ subfamily.

It is found in the cytoplasm. The catalysed reaction is a (3R)-hydroxyacyl-[ACP] = a (2E)-enoyl-[ACP] + H2O. In terms of biological role, involved in unsaturated fatty acids biosynthesis. Catalyzes the dehydration of short chain beta-hydroxyacyl-ACPs and long chain saturated and unsaturated beta-hydroxyacyl-ACPs. This is 3-hydroxyacyl-[acyl-carrier-protein] dehydratase FabZ from Streptococcus pyogenes serotype M1.